A 378-amino-acid polypeptide reads, in one-letter code: 7-methylxanthine methyltransferase 1 (378 aa).

Tyr-18, Cys-61, Asn-66, Asp-100, Leu-101, Ser-139, Phe-140, and Cys-156 together coordinate S-adenosyl-L-homocysteine. The theobromine site is built by Tyr-157, His-160, and Trp-161. Residues Asn-178, Asp-260, Phe-262, and Asn-263 each contribute to the Mg(2+) site. Tyr-362 is a binding site for theobromine.

The protein belongs to the methyltransferase superfamily. Type-7 methyltransferase family. The cofactor is Mg(2+). As to expression, mainly expressed, at low levels, in leaves and fruits (grains). Also present, at lower levels, in roots, stamens and pistils.

The protein resides in the cytoplasm. It catalyses the reaction 7-methylxanthine + S-adenosyl-L-methionine = theobromine + S-adenosyl-L-homocysteine + H(+). Its pathway is alkaloid biosynthesis. Functionally, involved in the biosynthesis of caffeine. Catalyzes the conversion of 7-methylxanthine (7mX) to theobromine and of paraxanthine to caffeine. This chain is 7-methylxanthine methyltransferase 1, found in Coffea canephora (Robusta coffee).